The sequence spans 375 residues: Succinyl-diaminopimelate desuccinylase (375 aa).

Residue histidine 66 coordinates Zn(2+). Residue aspartate 68 is part of the active site. Aspartate 99 provides a ligand contact to Zn(2+). Residue glutamate 133 is the Proton acceptor of the active site. 3 residues coordinate Zn(2+): glutamate 134, glutamate 162, and histidine 348.

The protein belongs to the peptidase M20A family. DapE subfamily. Homodimer. The cofactor is Zn(2+). Requires Co(2+) as cofactor.

It carries out the reaction N-succinyl-(2S,6S)-2,6-diaminopimelate + H2O = (2S,6S)-2,6-diaminopimelate + succinate. It functions in the pathway amino-acid biosynthesis; L-lysine biosynthesis via DAP pathway; LL-2,6-diaminopimelate from (S)-tetrahydrodipicolinate (succinylase route): step 3/3. Functionally, catalyzes the hydrolysis of N-succinyl-L,L-diaminopimelic acid (SDAP), forming succinate and LL-2,6-diaminopimelate (DAP), an intermediate involved in the bacterial biosynthesis of lysine and meso-diaminopimelic acid, an essential component of bacterial cell walls. This Methylobacillus flagellatus (strain ATCC 51484 / DSM 6875 / VKM B-1610 / KT) protein is Succinyl-diaminopimelate desuccinylase.